The sequence spans 475 residues: Aspartyl/glutamyl-tRNA(Asn/Gln) amidotransferase subunit B (475 aa).

It belongs to the GatB/GatE family. GatB subfamily. Heterotrimer of A, B and C subunits.

It catalyses the reaction L-glutamyl-tRNA(Gln) + L-glutamine + ATP + H2O = L-glutaminyl-tRNA(Gln) + L-glutamate + ADP + phosphate + H(+). It carries out the reaction L-aspartyl-tRNA(Asn) + L-glutamine + ATP + H2O = L-asparaginyl-tRNA(Asn) + L-glutamate + ADP + phosphate + 2 H(+). In terms of biological role, allows the formation of correctly charged Asn-tRNA(Asn) or Gln-tRNA(Gln) through the transamidation of misacylated Asp-tRNA(Asn) or Glu-tRNA(Gln) in organisms which lack either or both of asparaginyl-tRNA or glutaminyl-tRNA synthetases. The reaction takes place in the presence of glutamine and ATP through an activated phospho-Asp-tRNA(Asn) or phospho-Glu-tRNA(Gln). This is Aspartyl/glutamyl-tRNA(Asn/Gln) amidotransferase subunit B from Bacillus anthracis (strain A0248).